A 598-amino-acid polypeptide reads, in one-letter code: MDISRLRNFSIIAHIDHGKSTLADRLLEFTGALSQREMQNQFLDKMDLERERGITIKAQTVRLTYRADDGNDYVLNLIDTPGHVDFTYEVSRSLAACEGGLLVVDASQGVEAQTLANVYLALDINLEVFPVLNKIDLPAADPERVIQEIEEIIGIDAHDAVLASAKEGIGTHEILEEIVKKIPPPKGDASAPLRALLFDSWYDQYQGVIILVRIFDGTLKKGDRIQLMATRSSFEALKVGVFAPTMVETQQLAAGEVGFVIAGIKEVADAKVGDTVTLQHRPCSSALEGFKEVKPMVFSGLYPIDTVQYEQLRDALAKLKLNDSSFSYDPETSLALGFGFRCGFLGLLHMEIIQERLEREFGLDLITTAPTVVYRVHRVTGEVQSIESANQMPELQHVEYLEEPFILAHIHVPNEFVGGVLALCEDKRGVQREIKYLTQNRVMIIYELPLNEIVLDFYDRLKSITKGYASLDYEHLDYRKSDLVRMNVMINGEVVDALSLILHRDKAYYRGRDLVSKMKELIPRQMFEVAIQAAIGNKIIARETVKAMRKDVLAKCYGGDITRKRKLLEKQKEGKKRMKNVGNVELPQDAFLAILKVE.

The tr-type G domain occupies 4–186 (SRLRNFSIIA…EIVKKIPPPK (183 aa)). Residues 16 to 21 (DHGKST) and 133 to 136 (NKID) contribute to the GTP site.

This sequence belongs to the TRAFAC class translation factor GTPase superfamily. Classic translation factor GTPase family. LepA subfamily.

The protein localises to the cell inner membrane. It carries out the reaction GTP + H2O = GDP + phosphate + H(+). Functionally, required for accurate and efficient protein synthesis under certain stress conditions. May act as a fidelity factor of the translation reaction, by catalyzing a one-codon backward translocation of tRNAs on improperly translocated ribosomes. Back-translocation proceeds from a post-translocation (POST) complex to a pre-translocation (PRE) complex, thus giving elongation factor G a second chance to translocate the tRNAs correctly. Binds to ribosomes in a GTP-dependent manner. The chain is Elongation factor 4 from Pelobacter propionicus (strain DSM 2379 / NBRC 103807 / OttBd1).